The chain runs to 95 residues: Transcription and mRNA export factor ENY2-1 (95 aa).

The protein belongs to the ENY2 family. As to quaternary structure, component of the nuclear pore complex (NPC)-associated TREX-2 complex (transcription and export complex 2). Component of the SAGA transcription coactivator-HAT complex. Within the SAGA complex, participates in a subcomplex of SAGA called the DUB module (deubiquitination module).

It localises to the nucleus. The protein resides in the nucleoplasm. Involved in mRNA export coupled transcription activation by association with both the TREX-2 and the SAGA complexes. The transcription regulatory histone acetylation (HAT) complex SAGA is a multiprotein complex that activates transcription by remodeling chromatin and mediating histone acetylation and deubiquitination. Within the SAGA complex, participates in a subcomplex that specifically deubiquitinates histones. The SAGA complex is recruited to specific gene promoters by activators, where it is required for transcription. The TREX-2 complex functions in docking export-competent ribonucleoprotein particles (mRNPs) to the nuclear entrance of the nuclear pore complex (nuclear basket). TREX-2 participates in mRNA export and accurate chromatin positioning in the nucleus by tethering genes to the nuclear periphery. This chain is Transcription and mRNA export factor ENY2-1 (eny2-1), found in Salmo salar (Atlantic salmon).